Reading from the N-terminus, the 266-residue chain is Tryptophan synthase alpha chain (266 aa).

Active-site proton acceptor residues include E47 and D58.

Belongs to the TrpA family. Tetramer of two alpha and two beta chains.

The catalysed reaction is (1S,2R)-1-C-(indol-3-yl)glycerol 3-phosphate + L-serine = D-glyceraldehyde 3-phosphate + L-tryptophan + H2O. It functions in the pathway amino-acid biosynthesis; L-tryptophan biosynthesis; L-tryptophan from chorismate: step 5/5. In terms of biological role, the alpha subunit is responsible for the aldol cleavage of indoleglycerol phosphate to indole and glyceraldehyde 3-phosphate. The polypeptide is Tryptophan synthase alpha chain (Leptospira biflexa serovar Patoc (strain Patoc 1 / Ames)).